The primary structure comprises 567 residues: Laccase-3 (567 aa).

The signal sequence occupies residues 1–24; the sequence is MASSSSSRLLFLLSCSVLALLAGA. Plastocyanin-like domains lie at 32 to 148 and 158 to 310; these read IVQE…PREN and REVP…YDCG. An N-linked (GlcNAc...) asparagine glycan is attached at Asn-78. Residues His-82, His-84, His-127, and His-129 each contribute to the Cu cation site. 7 N-linked (GlcNAc...) asparagine glycosylation sites follow: Asn-148, Asn-187, Asn-203, Asn-298, Asn-330, Asn-379, and Asn-389. Residues 415 to 551 form the Plastocyanin-like 3 domain; it reads DFPAYPPVQF…AMAFLVEDGY (137 aa). The Cu cation site is built by His-468, His-471, His-473, His-530, Cys-531, His-532, and His-536.

This sequence belongs to the multicopper oxidase family. Requires Cu cation as cofactor.

The protein localises to the secreted. Its subcellular location is the extracellular space. It localises to the apoplast. It catalyses the reaction 4 hydroquinone + O2 = 4 benzosemiquinone + 2 H2O. Lignin degradation and detoxification of lignin-derived products. The chain is Laccase-3 (LAC3) from Oryza sativa subsp. japonica (Rice).